Consider the following 344-residue polypeptide: N-acetyl-gamma-glutamyl-phosphate reductase (344 aa).

The active site involves Cys150.

It belongs to the NAGSA dehydrogenase family. Type 1 subfamily.

It is found in the cytoplasm. The catalysed reaction is N-acetyl-L-glutamate 5-semialdehyde + phosphate + NADP(+) = N-acetyl-L-glutamyl 5-phosphate + NADPH + H(+). It participates in amino-acid biosynthesis; L-arginine biosynthesis; N(2)-acetyl-L-ornithine from L-glutamate: step 3/4. In terms of biological role, catalyzes the NADPH-dependent reduction of N-acetyl-5-glutamyl phosphate to yield N-acetyl-L-glutamate 5-semialdehyde. The sequence is that of N-acetyl-gamma-glutamyl-phosphate reductase from Pseudomonas aeruginosa (strain UCBPP-PA14).